The following is a 313-amino-acid chain: Ribosomal RNA small subunit methyltransferase H (313 aa).

S-adenosyl-L-methionine-binding positions include 35–37 (GGH), Asp-55, Phe-79, Asp-100, and Gln-107.

This sequence belongs to the methyltransferase superfamily. RsmH family.

The protein localises to the cytoplasm. It carries out the reaction cytidine(1402) in 16S rRNA + S-adenosyl-L-methionine = N(4)-methylcytidine(1402) in 16S rRNA + S-adenosyl-L-homocysteine + H(+). Specifically methylates the N4 position of cytidine in position 1402 (C1402) of 16S rRNA. The chain is Ribosomal RNA small subunit methyltransferase H from Burkholderia vietnamiensis (strain G4 / LMG 22486) (Burkholderia cepacia (strain R1808)).